The chain runs to 456 residues: Chromosomal replication initiator protein DnaA 1 (456 aa).

A domain I, interacts with DnaA modulators region spans residues 1–68 (MRAWEEFLLL…KANLINNNGK (68 aa)). Positions 68-101 (KPIRVRVTSLDKSTPFKESQIQQEKTAYFTMQYG) are domain II. Residues 102-320 (DIDPQMSFAN…HALTTLAKRV (219 aa)) are domain III, AAA+ region. ATP-binding residues include Ser-150, Gly-152, Lys-153, and Thr-154. Residues 321–456 (AYKKLSHQLL…AYQSLDLIVD (136 aa)) form a domain IV, binds dsDNA region.

This sequence belongs to the DnaA family. In terms of assembly, oligomerizes as a right-handed, spiral filament on DNA at oriC.

It localises to the cytoplasm. Functionally, plays an essential role in the initiation and regulation of chromosomal replication. ATP-DnaA binds to the origin of replication (oriC) to initiate formation of the DNA replication initiation complex once per cell cycle. Binds the DnaA box (a 9 base pair repeat at the origin) and separates the double-stranded (ds)DNA. Forms a right-handed helical filament on oriC DNA; dsDNA binds to the exterior of the filament while single-stranded (ss)DNA is stabiized in the filament's interior. The ATP-DnaA-oriC complex binds and stabilizes one strand of the AT-rich DNA unwinding element (DUE), permitting loading of DNA polymerase. After initiation quickly degrades to an ADP-DnaA complex that is not apt for DNA replication. Binds acidic phospholipids. In Chlamydia muridarum (strain MoPn / Nigg), this protein is Chromosomal replication initiator protein DnaA 1.